The primary structure comprises 130 residues: MAKAPARSTRKRAKRQVADGMAHIHASFNNTIVTITDRSGNALAWATSGGSGFRGSRKSTPFAAQVAAERAGVAAQEYGLKNLEVFVKGPGPGRESAIRALNATGYKITNITDVTPIPHNGCRPPKKRRV.

Belongs to the universal ribosomal protein uS11 family. As to quaternary structure, part of the 30S ribosomal subunit. Interacts with proteins S7 and S18. Binds to IF-3.

Located on the platform of the 30S subunit, it bridges several disparate RNA helices of the 16S rRNA. Forms part of the Shine-Dalgarno cleft in the 70S ribosome. The polypeptide is Small ribosomal subunit protein uS11 (Alteromonas mediterranea (strain DSM 17117 / CIP 110805 / LMG 28347 / Deep ecotype)).